Here is a 1380-residue protein sequence, read N- to C-terminus: Protein TORNADO 1 (1380 aa).

10 LRR repeats span residues 26-46 (FFNLQTLSFSSSGNTTHCQLI), 47-70 (TESSMNINVTRDNLTSLSQIFIEL), 105-132 (TSKIKQLAFRKNRFSEQCLNELSEILKR), 161-184 (NDSLEELQIWEDSIGSKGAEELSR), 266-289 (NTTVRSLDMTGAKLNSRWAKEFRW), 299-322 (EVKLSKTGLKDKAVVYIAAGLFKN), 323-346 (KSLQSLYVDGNRFGSVGVEDLLCP), 348-371 (SRFSALQLQANITLRSIVFGGSNT), 446-472 (INPLIEEIDLARTPLQDSGKADEIYQK), and 476-502 (NGRKIDEAETDDSLKDMPLTEPKSVRA). The Roc domain maps to 493–702 (PLTEPKSVRA…HHIRMTSKAI (210 aa)). GTP contacts are provided by residues 506–513 (GQNYAGKT) and 567–571 (NLAGQ). The chain crosses the membrane as a helical span at residues 574–594 (FFALHDLMFPSPCFFLIVLSL). 6 LRR repeats span residues 640–665 (LTHSEKINLQSESFQATVGCIQRLRD), 688–712 (VSKLTHHIRMTSKAILQRVPRVYQL), 799–826 (LTQLIKLDVRKQSTGERNGFVSRKELEK), 1023–1046 (QSQFVSLHRLKEALSSVPAETMYD), 1131–1154 (EAVLQRLKIIEQEIRDLKQEIQGL), and 1229–1254 (QLGCDVMQIDNQAVKCLAPYMTNFMK). 641 to 644 (THSE) lines the GTP pocket. Residues 757–931 (NIQIVETRRH…LQVHLHNRIM (175 aa)) form the COR domain. 2 consecutive transmembrane segments (helical) span residues 1255–1275 (LVTFALRIGANWAAGMGHMIP) and 1287–1307 (PAVMTGAAGAAGAIGVAAALG).

Expressed in seedlings, roots, leaves, stems and flowers. Present in ovules, prominently in nucellus and integuments.

Its subcellular location is the membrane. Involved in the basipetal transport of auxin (IAA) that modulates growth and organs organization. Required for initial divisions in the epidermal/lateral root cap leading to the formation of epidermal cells and a clone of lateral root cap cells, as well as for the maintenance of the radial pattern of cell specification in the root, thus regulating the distinction between the lateral root cap and epidermis. In Arabidopsis thaliana (Mouse-ear cress), this protein is Protein TORNADO 1 (TRN1).